The primary structure comprises 159 residues: Small ribosomal subunit protein uS4 (159 aa).

The S4 RNA-binding domain occupies 106-158 (RRLQTLVFRMGLAKSIHHARQLVVHGHVLVAGRRVTSPGFLVPRELEDKITIE).

Belongs to the universal ribosomal protein uS4 family. In terms of assembly, part of the 30S ribosomal subunit. Contacts protein S5. The interaction surface between S4 and S5 is involved in control of translational fidelity.

One of the primary rRNA binding proteins, it binds directly to 16S rRNA where it nucleates assembly of the body of the 30S subunit. Functionally, with S5 and S12 plays an important role in translational accuracy. This chain is Small ribosomal subunit protein uS4, found in Pyrobaculum calidifontis (strain DSM 21063 / JCM 11548 / VA1).